The primary structure comprises 395 residues: NAD(P)H-quinone oxidoreductase subunit H (395 aa).

Belongs to the complex I 49 kDa subunit family. In terms of assembly, NDH-1 can be composed of about 15 different subunits; different subcomplexes with different compositions have been identified which probably have different functions.

Its subcellular location is the cellular thylakoid membrane. The enzyme catalyses a plastoquinone + NADH + (n+1) H(+)(in) = a plastoquinol + NAD(+) + n H(+)(out). It catalyses the reaction a plastoquinone + NADPH + (n+1) H(+)(in) = a plastoquinol + NADP(+) + n H(+)(out). Functionally, NDH-1 shuttles electrons from an unknown electron donor, via FMN and iron-sulfur (Fe-S) centers, to quinones in the respiratory and/or the photosynthetic chain. The immediate electron acceptor for the enzyme in this species is believed to be plastoquinone. Couples the redox reaction to proton translocation, and thus conserves the redox energy in a proton gradient. Cyanobacterial NDH-1 also plays a role in inorganic carbon-concentration. This is NAD(P)H-quinone oxidoreductase subunit H from Prochlorococcus marinus (strain MIT 9301).